A 162-amino-acid polypeptide reads, in one-letter code: Flagellar assembly factor FliW (162 aa).

It belongs to the FliW family. In terms of assembly, interacts with translational regulator CsrA and flagellin(s).

The protein localises to the cytoplasm. Acts as an anti-CsrA protein, binds CsrA and prevents it from repressing translation of its target genes, one of which is flagellin. Binds to flagellin and participates in the assembly of the flagellum. This is Flagellar assembly factor FliW from Magnetococcus marinus (strain ATCC BAA-1437 / JCM 17883 / MC-1).